A 429-amino-acid chain; its full sequence is Palmitoyltransferase SWF1 (429 aa).

The Lumenal portion of the chain corresponds to 1–3 (MGT). A helical membrane pass occupies residues 4–24 (IAIIAAVILGISFMTFVAFFG). The Cytoplasmic portion of the chain corresponds to 25 to 79 (RLPALRNTPISFLHRLIWIHLPNGILTVDRTLTNGRLTTSLTRLGRHLWYDQHPT). The helical transmembrane segment at 80 to 100 (ILIFFFLLLSVGEYLYLPVAW) threads the bilayer. Topologically, residues 101–112 (PHFSFTHKFFGT) are lumenal. Residues 113 to 133 (IAILCPYIFLYLSAYTDPGVI) form a helical membrane-spanning segment. Topologically, residues 134-201 (NAKTHVREMA…CVGANNQRWF (68 aa)) are cytoplasmic. Positions 156 to 206 (TSCETCHLLKPARSKHCSICKKCVGRMDHHCIFINNCVGANNQRWFILLLL) constitute a DHHC domain. The chain crosses the membrane as a helical span at residues 202-222 (ILLLLSTAILTLYGGVLGLVI). The Lumenal segment spans residues 223–274 (IRAKIQARFPYWTLMPWWTSTQAWNSGDLDFHRWLLLWSWGLQSGVAMGGVT). A helical transmembrane segment spans residues 275–295 (LLALLTTPLVWGLLGYHLWLV). Topologically, residues 296-429 (YCGTTTNESM…ERGRNRRRSS (134 aa)) are cytoplasmic. The span at 408 to 421 (GRSPVDEREFGRER) shows a compositional bias: basic and acidic residues. Residues 408–429 (GRSPVDEREFGRERGRNRRRSS) form a disordered region.

Belongs to the DHHC palmitoyltransferase family. SWF1 subfamily.

The protein resides in the endoplasmic reticulum membrane. The enzyme catalyses L-cysteinyl-[protein] + hexadecanoyl-CoA = S-hexadecanoyl-L-cysteinyl-[protein] + CoA. In terms of biological role, palmitoyltransferase that targets several endosomal SNAREs. Palmitoylates the SNAREs at cysteine residues close to the cytoplasmic end of their transmembrane domain. May have a role in the cellular quality control of transmembrane domain-containing proteins. The sequence is that of Palmitoyltransferase SWF1 (swf-1) from Neurospora crassa (strain ATCC 24698 / 74-OR23-1A / CBS 708.71 / DSM 1257 / FGSC 987).